Consider the following 513-residue polypeptide: Palmitoyltransferase ZDHHC14 (513 aa).

Residues Met1–Gln59 are Cytoplasmic-facing. Residues Thr60–Phe80 form a helical membrane-spanning segment. Residues Asp81–Asn88 lie on the Lumenal side of the membrane. Residues Leu89–Leu109 form a helical membrane-spanning segment. The Cytoplasmic segment spans residues Arg110–Arg207. The DHHC domain occupies Lys164–Leu214. The active-site S-palmitoyl cysteine intermediate is Cys194. The helical transmembrane segment at Phe208 to Ile228 threads the bilayer. The Lumenal portion of the chain corresponds to Thr229 to Thr266. A helical transmembrane segment spans residues Ala267–Leu287. Topologically, residues Ser288 to Val513 are cytoplasmic. A disordered region spans residues Phe348–Asn369. Over residues Gln355–Asn369 the composition is skewed to polar residues.

This sequence belongs to the DHHC palmitoyltransferase family. ERF2/ZDHHC9 subfamily.

Its subcellular location is the endoplasmic reticulum membrane. The protein localises to the golgi apparatus membrane. It carries out the reaction L-cysteinyl-[protein] + hexadecanoyl-CoA = S-hexadecanoyl-L-cysteinyl-[protein] + CoA. Its function is as follows. Palmitoyltransferase that could catalyze the addition of palmitate onto various protein substrates. The chain is Palmitoyltransferase ZDHHC14 (zdhhc14) from Danio rerio (Zebrafish).